The sequence spans 655 residues: Sphingomyelin phosphodiesterase 3 (655 aa).

Residues 1 to 10 lie on the Cytoplasmic side of the membrane; sequence MVLYTTPFPN. An intramembrane region (helical) is located at residues 11-31; the sequence is SCLSALHAVSWALIFPCYWLV. The Cytoplasmic segment spans residues 32-64; that stretch reads DRLLASFIPTTYEKRQRADDPCCLQLFCTVLFT. S-palmitoyl cysteine attachment occurs at residues Cys53, Cys54, and Cys59. The segment at residues 65–85 is an intramembrane region (helical); the sequence is PVYLALLVAALPFAFLGFIFW. The Cytoplasmic portion of the chain corresponds to 86 to 655; sequence SPLQSARRPY…LMVSAGEEEA (570 aa). Ser178 is subject to Phosphoserine. Residues 209 to 318 are disordered; sequence VEYKGDGGRH…SGGSGEPGAN (110 aa). Composition is skewed to basic and acidic residues over residues 211 to 221 and 246 to 255; these read YKGDGGRHPSD and GGEEGGRPQE. Position 289 is a phosphoserine (Ser289). Glu362 contacts Mg(2+). Residues Cys395 and Cys396 are each lipidated (S-palmitoyl cysteine). Residue His639 is the Proton acceptor of the active site.

It belongs to the neutral sphingomyelinase family. Mg(2+) is required as a cofactor. Palmitoylated, palmitoylation-deficient proteins are targeted for lysosomal degradation. Predominantly expressed in brain (at protein level).

The protein resides in the golgi apparatus membrane. Its subcellular location is the cell membrane. The enzyme catalyses a sphingomyelin + H2O = phosphocholine + an N-acylsphing-4-enine + H(+). The catalysed reaction is N-(15Z-tetracosenoyl)sphing-4-enine-1-phosphocholine + H2O = N-(15Z-tetracosenoyl)-sphing-4-enine + phosphocholine + H(+). It carries out the reaction N-(tetracosanoyl)-sphing-4-enine-1-phosphocholine + H2O = N-tetracosanoyl-sphing-4-enine + phosphocholine + H(+). It catalyses the reaction N-(hexadecanoyl)-sphing-4-enine-1-phosphocholine + H2O = N-hexadecanoylsphing-4-enine + phosphocholine + H(+). The enzyme catalyses an N-(acyl)-sphingosylphosphocholine + H2O = an N-acyl-sphingoid base + phosphocholine + H(+). The catalysed reaction is 1-hexadecanoyl-sn-glycero-3-phosphocholine + H2O = 1-hexadecanoyl-sn-glycerol + phosphocholine + H(+). It carries out the reaction 1-O-octadecyl-sn-glycero-3-phosphocholine + H2O = 1-O-octadecyl-sn-glycerol + phosphocholine + H(+). It catalyses the reaction a sphingosylphosphocholine + H2O = a sphingoid base + phosphocholine + H(+). The protein operates within lipid metabolism; sphingolipid metabolism. Inhibited by nSMase inhibitor GW4869. Binding of anionic phospholipids (APLs) such as phosphatidylserine (PS) and phosphatidic acid (PA) increases enzymatic activity. Its function is as follows. Catalyzes the hydrolysis of sphingomyelin to form ceramide and phosphocholine. Ceramide mediates numerous cellular functions, such as apoptosis and growth arrest, and is capable of regulating these 2 cellular events independently. Also hydrolyzes sphingosylphosphocholine. Regulates the cell cycle by acting as a growth suppressor in confluent cells. Probably acts as a regulator of postnatal development and participates in bone and dentin mineralization. Binds to anionic phospholipids (APLs) such as phosphatidylserine (PS) and phosphatidic acid (PA) that modulate enzymatic activity and subcellular location. May be involved in IL-1-beta-induced JNK activation in hepatocytes. May act as a mediator in transcriptional regulation of NOS2/iNOS via the NF-kappa-B activation under inflammatory conditions. In Mus musculus (Mouse), this protein is Sphingomyelin phosphodiesterase 3.